Reading from the N-terminus, the 463-residue chain is Bifunctional protein HldE (463 aa).

The ribokinase stretch occupies residues 1–315; that stretch reads MKKILVIGDL…LILNQTHPKI (315 aa). ATP is bound at residue 191–194; sequence NRAE. Asp-260 is a catalytic residue. Positions 334–463 are cytidylyltransferase; sequence FTNGCFDILH…IEKIKRTHND (130 aa).

This sequence in the N-terminal section; belongs to the carbohydrate kinase PfkB family. The protein in the C-terminal section; belongs to the cytidylyltransferase family. In terms of assembly, homodimer.

It carries out the reaction D-glycero-beta-D-manno-heptose 7-phosphate + ATP = D-glycero-beta-D-manno-heptose 1,7-bisphosphate + ADP + H(+). It catalyses the reaction D-glycero-beta-D-manno-heptose 1-phosphate + ATP + H(+) = ADP-D-glycero-beta-D-manno-heptose + diphosphate. It participates in nucleotide-sugar biosynthesis; ADP-L-glycero-beta-D-manno-heptose biosynthesis; ADP-L-glycero-beta-D-manno-heptose from D-glycero-beta-D-manno-heptose 7-phosphate: step 1/4. The protein operates within nucleotide-sugar biosynthesis; ADP-L-glycero-beta-D-manno-heptose biosynthesis; ADP-L-glycero-beta-D-manno-heptose from D-glycero-beta-D-manno-heptose 7-phosphate: step 3/4. Its pathway is bacterial outer membrane biogenesis; LPS core biosynthesis. In terms of biological role, catalyzes the phosphorylation of D-glycero-D-manno-heptose 7-phosphate at the C-1 position to selectively form D-glycero-beta-D-manno-heptose-1,7-bisphosphate. Its function is as follows. Catalyzes the ADP transfer from ATP to D-glycero-beta-D-manno-heptose 1-phosphate, yielding ADP-D-glycero-beta-D-manno-heptose. In Helicobacter pylori (strain J99 / ATCC 700824) (Campylobacter pylori J99), this protein is Bifunctional protein HldE.